We begin with the raw amino-acid sequence, 411 residues long: Arginine deiminase (411 aa).

Cysteine 401 acts as the Amidino-cysteine intermediate in catalysis.

The protein belongs to the arginine deiminase family.

It is found in the cytoplasm. The enzyme catalyses L-arginine + H2O = L-citrulline + NH4(+). It functions in the pathway amino-acid degradation; L-arginine degradation via ADI pathway; carbamoyl phosphate from L-arginine: step 1/2. This Staphylococcus aureus (strain JH9) protein is Arginine deiminase.